We begin with the raw amino-acid sequence, 432 residues long: 3-phosphoshikimate 1-carboxyvinyltransferase (432 aa).

The 3-phosphoshikimate site is built by lysine 22, serine 23, and arginine 27. Residue lysine 22 coordinates phosphoenolpyruvate. The phosphoenolpyruvate site is built by glycine 96 and arginine 127. 3-phosphoshikimate contacts are provided by serine 173, serine 174, glutamine 175, serine 201, aspartate 316, asparagine 339, and lysine 343. Glutamine 175 contributes to the phosphoenolpyruvate binding site. Catalysis depends on aspartate 316, which acts as the Proton acceptor. Phosphoenolpyruvate is bound by residues arginine 347, arginine 391, and lysine 416.

This sequence belongs to the EPSP synthase family. As to quaternary structure, monomer.

The protein localises to the cytoplasm. The enzyme catalyses 3-phosphoshikimate + phosphoenolpyruvate = 5-O-(1-carboxyvinyl)-3-phosphoshikimate + phosphate. It participates in metabolic intermediate biosynthesis; chorismate biosynthesis; chorismate from D-erythrose 4-phosphate and phosphoenolpyruvate: step 6/7. Its function is as follows. Catalyzes the transfer of the enolpyruvyl moiety of phosphoenolpyruvate (PEP) to the 5-hydroxyl of shikimate-3-phosphate (S3P) to produce enolpyruvyl shikimate-3-phosphate and inorganic phosphate. This is 3-phosphoshikimate 1-carboxyvinyltransferase from Actinobacillus pleuropneumoniae serotype 7 (strain AP76).